The chain runs to 180 residues: MTQRLKTLYQETILPKLQEEFGYKNIHQVPKLTKVTVNRGLGEASQNAKALESSLTELATITGQKPVVTRARKAIAGFKIREGMPVGVMVTLRSERMYAFLDRLINLALPRIRDFRGISPNSFDGRGNYSLGIREQLIFPEIDYDTIDQIRGMDVSIITSAQTDEEGRALLKALGMPFRS.

Belongs to the universal ribosomal protein uL5 family. As to quaternary structure, part of the 50S ribosomal subunit; part of the 5S rRNA/L5/L18/L25 subcomplex. Contacts the 5S rRNA and the P site tRNA. Forms a bridge to the 30S subunit in the 70S ribosome.

In terms of biological role, this is one of the proteins that bind and probably mediate the attachment of the 5S RNA into the large ribosomal subunit, where it forms part of the central protuberance. In the 70S ribosome it contacts protein S13 of the 30S subunit (bridge B1b), connecting the 2 subunits; this bridge is implicated in subunit movement. Contacts the P site tRNA; the 5S rRNA and some of its associated proteins might help stabilize positioning of ribosome-bound tRNAs. This Synechocystis sp. (strain ATCC 27184 / PCC 6803 / Kazusa) protein is Large ribosomal subunit protein uL5.